We begin with the raw amino-acid sequence, 64 residues long: H/ACA ribonucleoprotein complex subunit 3 (64 aa).

It belongs to the NOP10 family. Component of the box H/ACA small nucleolar ribonucleoprotein (H/ACA snoRNP) complex consisting of Nop60B, Gar1, NPH2 and Nop10, and associated with H/ACA-type snoRNAs.

The protein resides in the nucleus. The protein localises to the nucleolus. In terms of biological role, component of the box H/ACA small nucleolar ribonucleoprotein (H/ACA snoRNP) complex, which catalyzes pseudouridylation of rRNA. This involves the isomerization of uridine such that the ribose is subsequently attached to C5, instead of the normal N1. Pseudouridine ('psi') residues may serve to stabilize the conformation of rRNAs. Required for ribosome biogenesis. H/ACA snoRNP complex-dependent ribosome biogenesis is important in female germline cell differentiation during oogenesis. The sequence is that of H/ACA ribonucleoprotein complex subunit 3 from Drosophila melanogaster (Fruit fly).